The chain runs to 437 residues: Homogentisate 1,2-dioxygenase (437 aa).

Residue His-295 is the Proton acceptor of the active site. The Fe cation site is built by His-338 and Glu-344. Positions 353 and 374 each coordinate homogentisate. His-374 contributes to the Fe cation binding site.

This sequence belongs to the homogentisate dioxygenase family. Hexamer; dimer of trimers. The cofactor is Fe cation.

The enzyme catalyses homogentisate + O2 = 4-maleylacetoacetate + H(+). The protein operates within amino-acid degradation; L-phenylalanine degradation; acetoacetate and fumarate from L-phenylalanine: step 4/6. Involved in the catabolism of homogentisate (2,5-dihydroxyphenylacetate or 2,5-OH-PhAc), a central intermediate in the degradation of phenylalanine and tyrosine. Catalyzes the oxidative ring cleavage of the aromatic ring of homogentisate to yield maleylacetoacetate. The protein is Homogentisate 1,2-dioxygenase of Myxococcus xanthus (strain DK1622).